We begin with the raw amino-acid sequence, 316 residues long: Fe-S cluster assembly protein DRE2 (316 aa).

The tract at residues 4–156 (SMPVATTVAA…KPQHVASTSV (153 aa)) is N-terminal SAM-like domain. Residues 157–202 (PLKSRQPGALLNRKKTDPAKKQALWALSSPSTPKIDPEALLTAEDK) are linker. [2Fe-2S] cluster is bound by residues Cys209, Cys223, Cys226, and Cys228. The fe-S binding site A stretch occupies residues 209–228 (CEPVRSSAPRRKKACKSCSC). Residues Cys279, Cys282, Cys290, and Cys293 each coordinate [4Fe-4S] cluster. 2 consecutive short sequence motifs (cx2C motif) follow at residues 279-282 (CGSC) and 290-293 (CAGC). The fe-S binding site B stretch occupies residues 279-293 (CGSCFLGDAFRCAGC).

This sequence belongs to the anamorsin family. Monomer. Interacts with TAH18. Interacts with MIA40. Requires [2Fe-2S] cluster as cofactor. It depends on [4Fe-4S] cluster as a cofactor.

It localises to the cytoplasm. It is found in the mitochondrion intermembrane space. Component of the cytosolic iron-sulfur (Fe-S) protein assembly (CIA) machinery required for the maturation of extramitochondrial Fe-S proteins. Part of an electron transfer chain functioning in an early step of cytosolic Fe-S biogenesis, facilitating the de novo assembly of a [4Fe-4S] cluster on the scaffold complex CFD1-NBP35. Electrons are transferred to DRE2 from NADPH via the FAD- and FMN-containing protein TAH18. TAH18-DRE2 are also required for the assembly of the diferric tyrosyl radical cofactor of ribonucleotide reductase (RNR), probably by providing electrons for reduction during radical cofactor maturation in the catalytic small subunit RNR2. In Laccaria bicolor (strain S238N-H82 / ATCC MYA-4686) (Bicoloured deceiver), this protein is Fe-S cluster assembly protein DRE2.